Reading from the N-terminus, the 342-residue chain is S-adenosylmethionine:tRNA ribosyltransferase-isomerase (342 aa).

The protein belongs to the QueA family. Monomer.

Its subcellular location is the cytoplasm. The catalysed reaction is 7-aminomethyl-7-carbaguanosine(34) in tRNA + S-adenosyl-L-methionine = epoxyqueuosine(34) in tRNA + adenine + L-methionine + 2 H(+). Its pathway is tRNA modification; tRNA-queuosine biosynthesis. Transfers and isomerizes the ribose moiety from AdoMet to the 7-aminomethyl group of 7-deazaguanine (preQ1-tRNA) to give epoxyqueuosine (oQ-tRNA). The polypeptide is S-adenosylmethionine:tRNA ribosyltransferase-isomerase (Streptococcus pyogenes serotype M6 (strain ATCC BAA-946 / MGAS10394)).